Consider the following 272-residue polypeptide: Homeobox protein Hox-D12 (272 aa).

Residues 204-263 (SRRKRKPYTKQQIAELENEFLANEFINRQKRKELSDRLNLSDQQVKIWFQNRRMKKKRLV) constitute a DNA-binding region (homeobox).

It belongs to the Abd-B homeobox family.

The protein resides in the nucleus. In terms of biological role, sequence-specific transcription factor which is part of a developmental regulatory system that provides cells with specific positional identities on the anterior-posterior axis. This Heterodontus francisci (Horn shark) protein is Homeobox protein Hox-D12 (HOXD12).